The following is a 345-amino-acid chain: Carbamoyl phosphate synthase small chain (345 aa).

Positions M1–V169 are CPSase. 3 residues coordinate L-glutamine: S45, G213, and G215. One can recognise a Glutamine amidotransferase type-1 domain in the interval T168–A345. Residue C242 is the Nucleophile of the active site. L-glutamine is bound by residues F243, Q246, N282, G284, and Y285. Catalysis depends on residues H321 and E323.

This sequence belongs to the CarA family. In terms of assembly, composed of two chains; the small (or glutamine) chain promotes the hydrolysis of glutamine to ammonia, which is used by the large (or ammonia) chain to synthesize carbamoyl phosphate. Tetramer of heterodimers (alpha,beta)4.

It carries out the reaction hydrogencarbonate + L-glutamine + 2 ATP + H2O = carbamoyl phosphate + L-glutamate + 2 ADP + phosphate + 2 H(+). The catalysed reaction is L-glutamine + H2O = L-glutamate + NH4(+). It functions in the pathway amino-acid biosynthesis; L-arginine biosynthesis; carbamoyl phosphate from bicarbonate: step 1/1. The protein operates within pyrimidine metabolism; UMP biosynthesis via de novo pathway; (S)-dihydroorotate from bicarbonate: step 1/3. Functionally, small subunit of the glutamine-dependent carbamoyl phosphate synthetase (CPSase). CPSase catalyzes the formation of carbamoyl phosphate from the ammonia moiety of glutamine, carbonate, and phosphate donated by ATP, constituting the first step of 2 biosynthetic pathways, one leading to arginine and/or urea and the other to pyrimidine nucleotides. The small subunit (glutamine amidotransferase) binds and cleaves glutamine to supply the large subunit with the substrate ammonia. The chain is Carbamoyl phosphate synthase small chain from Thermoplasma volcanium (strain ATCC 51530 / DSM 4299 / JCM 9571 / NBRC 15438 / GSS1).